We begin with the raw amino-acid sequence, 318 residues long: Pyrimidine-specific ribonucleoside hydrolase RihA (318 aa).

His240 is an active-site residue.

The protein belongs to the IUNH family. RihA subfamily.

Its function is as follows. Hydrolyzes cytidine or uridine to ribose and cytosine or uracil, respectively. This is Pyrimidine-specific ribonucleoside hydrolase RihA from Shewanella sp. (strain MR-4).